We begin with the raw amino-acid sequence, 171 residues long: Transcription antitermination protein NusB (171 aa).

It belongs to the NusB family.

In terms of biological role, involved in transcription antitermination. Required for transcription of ribosomal RNA (rRNA) genes. Binds specifically to the boxA antiterminator sequence of the ribosomal RNA (rrn) operons. The polypeptide is Transcription antitermination protein NusB (Brucella melitensis biotype 1 (strain ATCC 23456 / CCUG 17765 / NCTC 10094 / 16M)).